The chain runs to 150 residues: Protein-export protein SecB (150 aa).

This sequence belongs to the SecB family. Homotetramer, a dimer of dimers. One homotetramer interacts with 1 SecA dimer.

It localises to the cytoplasm. Its function is as follows. One of the proteins required for the normal export of preproteins out of the cell cytoplasm. It is a molecular chaperone that binds to a subset of precursor proteins, maintaining them in a translocation-competent state. It also specifically binds to its receptor SecA. The protein is Protein-export protein SecB of Chromobacterium violaceum (strain ATCC 12472 / DSM 30191 / JCM 1249 / CCUG 213 / NBRC 12614 / NCIMB 9131 / NCTC 9757 / MK).